A 475-amino-acid polypeptide reads, in one-letter code: uncharacterized protein (475 aa).

The helical transmembrane segment at 7–28 (HVISIFETLGAYFINIFYNFLY) threads the bilayer. N73, N83, and N195 each carry an N-linked (GlcNAc...) asparagine; by host glycan. Residues 183-233 (ELEETYARLSSYNRSLLHQIEELTSEKKSLLADLSTLRKKYEKRQSEYRRL) are a coiled coil. Residues 295–305 (SQELTSKSPNN) show a composition bias toward polar residues. The disordered stretch occupies residues 295–324 (SQELTSKSPNNYPVPHSRTIVSKPPDNYPV). N-linked (GlcNAc...) asparagine; by host glycans are attached at residues N450 and N460.

It belongs to the asfivirus B475L family.

The protein resides in the host membrane. This is an uncharacterized protein from Ornithodoros (relapsing fever ticks).